The primary structure comprises 947 residues: MAASVSRAICVQKPGSKCTRDREATSFARRSVAAPRPPHAKAAGVIRSDSGAGRGQHCSPLRAVVDAAPIQTTKKRVFHFGKGKSEGNKTMKELLGGKGANLAEMASIGLSVPPGFTVSTEACQQYQDAGCALPAGLWAEIVDGLQWVEEYMGATLGDPQRPLLLSVRSGAAVSMPGMMDTVLNLGLNDEVAAGLAAKSGERFAYDSFRRFLDMFGNVVMDIPRSLFEEKLEHMKESKGLKNDTDLTASDLKELVGQYKEVYLSAKGEPFPSDPKKQLELAVLAVFNSWESPRAKKYRSINQITGLRGTAVNVQCMVFGNMGNTSGTGVLFTRNPNTGEKKLYGEFLVNAQGEDVVAGIRTPEDLDAMKNLMPQAYDELVENCNILESHYKEMQDIEFTVQENRLWMLQCRTGKRTGKSAVKIAVDMVNEGLVEPRSAIKMVEPGHLDQLLHPQFENPSAYKDQVIATGLPASPGAAVGQVVFTAEDAEAWHSQGKAAILVRAETSPEDVGGMHAAVGILTERGGMTSHAAVVARWWGKCCVSGCSGIRVNDAEKLVTIGSHVLREGEWLSLNGSTGEVILGKQPLSPPALSGDLGTFMAWVDDVRKLKVLANADTPDDALTARNNGAQGIGLCRTEHMFFASDERIKAVRQMIMAPTLELRQQALDRLLTYQRSDFEGIFRAMDGLPVTIRLLDHPSYEFLPEGNIEDIVSELCAETGANQEDALARIEKLSEVNPMLGFRGCRLGISYPELTEMQARAIFEAAIAMTNQGVQVFPEIMVPLVGTPQELGHQVTLIRQVAEKVFANVGKTIGYKVGTMIEIPRAALVADEIAEQAEFFSFGTNDLTQMTFGYSRDDVGKFIPVHLAQGILQHDPFEVLDQRGVGELVKFATERGRKARPNLKVGICGEHGGEPSSVAFFAKAGLDFVSCSPFRVPIARLAAAQVLV.

Residues 1–62 constitute a chloroplast transit peptide; that stretch reads MAASVSRAIC…GRGQHCSPLR (62 aa). Positions 21-54 are disordered; that stretch reads DREATSFARRSVAAPRPPHAKAAGVIRSDSGAGR. A63 carries the N-acetylalanine; partial modification. A Phosphothreonine modification is found at T309. At S506 the chain carries Phosphoserine. T527 carries the phosphothreonine; by PDRP1 modification. A Phosphoserine; by PDRP1 modification is found at S528. H529 functions as the Tele-phosphohistidine intermediate in the catalytic mechanism. Substrate-binding residues include R635, R692, E821, G842, T843, N844, and D845. Mg(2+) is bound at residue E821. D845 provides a ligand contact to Mg(2+). C907 (proton donor) is an active-site residue.

It belongs to the PEP-utilizing enzyme family. As to quaternary structure, homotetramer. Mg(2+) serves as cofactor. In terms of processing, phosphorylation of Thr-527 in the dark inactivates the enzyme, dephosphorylation upon light stimulation reactivates the enzyme. More highly phosphorylated when grown under high rather than low light regimes (70 vs 900 umol photons/m-2/s). the degree of phosphorylation is strictly regulated by light intensity and the light/dark transition has no influence. Phosphorylated in both mesophyll and bundle sheath cells. The phosphorylation at Ser-528 may be important for the phosphorylation at Thr-527 and may also be regulated by light intensity. In terms of tissue distribution, isoform C4PPDKZM1 mainly localized in mesophyll cells and only a low level is found in bundle sheath cells. Isoform CYPPDKZM1 expressed in roots, stems and etiolated leaves.

It localises to the plastid. Its subcellular location is the chloroplast. It is found in the cytoplasm. The catalysed reaction is pyruvate + phosphate + ATP = phosphoenolpyruvate + AMP + diphosphate + H(+). The protein operates within photosynthesis; C4 acid pathway. Activated by light-induced dephosphorylation. Inhibited by dark-induced phosphorylation. Both reactions are catalyzed by PDRP1. Inactivated by cold due to the dissociation of the homotetramer. Independent of circadian regulation. Its function is as follows. Formation of phosphoenolpyruvate, which is the primary acceptor of CO(2) in C4 and some Crassulacean acid metabolism plants. This Zea mays (Maize) protein is Pyruvate, phosphate dikinase 1, chloroplastic.